The sequence spans 149 residues: UPF0179 protein rrnAC1064 (149 aa).

It belongs to the UPF0179 family.

The chain is UPF0179 protein rrnAC1064 from Haloarcula marismortui (strain ATCC 43049 / DSM 3752 / JCM 8966 / VKM B-1809) (Halobacterium marismortui).